A 373-amino-acid chain; its full sequence is Dual-specificity RNA methyltransferase RlmN (373 aa).

The active-site Proton acceptor is the Glu-94. The Radical SAM core domain occupies 100–339 (EDDRATLCVS…VIVRKTRGDD (240 aa)). Cysteines 107 and 344 form a disulfide. Cys-114, Cys-118, and Cys-121 together coordinate [4Fe-4S] cluster. S-adenosyl-L-methionine contacts are provided by residues 168 to 169 (GE), Ser-200, 222 to 224 (SIH), and Asn-301. Cys-344 (S-methylcysteine intermediate) is an active-site residue.

The protein belongs to the radical SAM superfamily. RlmN family. Requires [4Fe-4S] cluster as cofactor.

It is found in the cytoplasm. The enzyme catalyses adenosine(2503) in 23S rRNA + 2 reduced [2Fe-2S]-[ferredoxin] + 2 S-adenosyl-L-methionine = 2-methyladenosine(2503) in 23S rRNA + 5'-deoxyadenosine + L-methionine + 2 oxidized [2Fe-2S]-[ferredoxin] + S-adenosyl-L-homocysteine. It carries out the reaction adenosine(37) in tRNA + 2 reduced [2Fe-2S]-[ferredoxin] + 2 S-adenosyl-L-methionine = 2-methyladenosine(37) in tRNA + 5'-deoxyadenosine + L-methionine + 2 oxidized [2Fe-2S]-[ferredoxin] + S-adenosyl-L-homocysteine. Its function is as follows. Specifically methylates position 2 of adenine 2503 in 23S rRNA and position 2 of adenine 37 in tRNAs. m2A2503 modification seems to play a crucial role in the proofreading step occurring at the peptidyl transferase center and thus would serve to optimize ribosomal fidelity. This chain is Dual-specificity RNA methyltransferase RlmN, found in Shewanella baltica (strain OS155 / ATCC BAA-1091).